We begin with the raw amino-acid sequence, 698 residues long: Elongation factor G (698 aa).

The 276-residue stretch at 10 to 285 folds into the tr-type G domain; it reads DKTRNIGIMA…AVVDYLPSPL (276 aa). GTP is bound by residues 19-26, 83-87, and 137-140; these read AHIDAGKT, DTPGH, and NKMD.

The protein belongs to the TRAFAC class translation factor GTPase superfamily. Classic translation factor GTPase family. EF-G/EF-2 subfamily.

The protein resides in the cytoplasm. In terms of biological role, catalyzes the GTP-dependent ribosomal translocation step during translation elongation. During this step, the ribosome changes from the pre-translocational (PRE) to the post-translocational (POST) state as the newly formed A-site-bound peptidyl-tRNA and P-site-bound deacylated tRNA move to the P and E sites, respectively. Catalyzes the coordinated movement of the two tRNA molecules, the mRNA and conformational changes in the ribosome. In Lactiplantibacillus plantarum (strain ATCC BAA-793 / NCIMB 8826 / WCFS1) (Lactobacillus plantarum), this protein is Elongation factor G.